A 1226-amino-acid polypeptide reads, in one-letter code: Methionine synthase (1226 aa).

Residues 6–326 enclose the Hcy-binding domain; the sequence is RAQIEAQLKQ…EHIRHMAMAV (321 aa). Residues Cys-248, Cys-311, and Cys-312 each coordinate Zn(2+). The region spanning 357 to 618 is the Pterin-binding domain; that stretch reads FVNVGERTNV…VPEKLREAVE (262 aa). Positions 651-745 constitute a B12-binding N-terminal domain; it reads SALEWRTWSV…FINASKQAGS (95 aa). Residues Glu-695, 757 to 761, His-760, Ser-805, Thr-809, and Ala-861 contribute to the methylcob(III)alamin site; that span reads GDVHD. The region spanning 747-882 is the B12-binding domain; sequence NGKILLATVK…SDELRPAFVE (136 aa). Residues 898–1226 form the AdoMet activation domain; it reads KKPRTKPVTL…EKWLGPNING (329 aa). Residues Asp-948, Arg-1136, and 1191–1192 contribute to the S-adenosyl-L-methionine site; that span reads YF.

It belongs to the vitamin-B12 dependent methionine synthase family. It depends on methylcob(III)alamin as a cofactor. Zn(2+) serves as cofactor.

The enzyme catalyses (6S)-5-methyl-5,6,7,8-tetrahydrofolate + L-homocysteine = (6S)-5,6,7,8-tetrahydrofolate + L-methionine. The protein operates within amino-acid biosynthesis; L-methionine biosynthesis via de novo pathway; L-methionine from L-homocysteine (MetH route): step 1/1. Catalyzes the transfer of a methyl group from methyl-cobalamin to homocysteine, yielding enzyme-bound cob(I)alamin and methionine. Subsequently, remethylates the cofactor using methyltetrahydrofolate. In Vibrio vulnificus (strain CMCP6), this protein is Methionine synthase (metH).